The sequence spans 347 residues: D-alanine--D-alanine ligase (347 aa).

Residues 133–342 (KQAFAQASLP…FPDLVHRLIQ (210 aa)) enclose the ATP-grasp domain. 169–224 (ETELGYPCFVKPANLGSSVGIAKVRDRAELEAALDQAAALDRRLIIEAAIDNPREV) serves as a coordination point for ATP. Mg(2+) is bound by residues Asp296, Glu309, and Asn311.

Belongs to the D-alanine--D-alanine ligase family. Mg(2+) serves as cofactor. It depends on Mn(2+) as a cofactor.

It is found in the cytoplasm. It catalyses the reaction 2 D-alanine + ATP = D-alanyl-D-alanine + ADP + phosphate + H(+). Its pathway is cell wall biogenesis; peptidoglycan biosynthesis. Cell wall formation. The protein is D-alanine--D-alanine ligase of Synechococcus elongatus (strain ATCC 33912 / PCC 7942 / FACHB-805) (Anacystis nidulans R2).